The sequence spans 294 residues: Phosphatidylserine decarboxylase proenzyme (294 aa).

Active-site charge relay system; for autoendoproteolytic cleavage activity residues include aspartate 100, histidine 157, and serine 261. Residue serine 261 is the Schiff-base intermediate with substrate; via pyruvic acid; for decarboxylase activity of the active site. Serine 261 is subject to Pyruvic acid (Ser); by autocatalysis.

Belongs to the phosphatidylserine decarboxylase family. PSD-B subfamily. Prokaryotic type I sub-subfamily. In terms of assembly, heterodimer of a large membrane-associated beta subunit and a small pyruvoyl-containing alpha subunit. Pyruvate serves as cofactor. In terms of processing, is synthesized initially as an inactive proenzyme. Formation of the active enzyme involves a self-maturation process in which the active site pyruvoyl group is generated from an internal serine residue via an autocatalytic post-translational modification. Two non-identical subunits are generated from the proenzyme in this reaction, and the pyruvate is formed at the N-terminus of the alpha chain, which is derived from the carboxyl end of the proenzyme. The autoendoproteolytic cleavage occurs by a canonical serine protease mechanism, in which the side chain hydroxyl group of the serine supplies its oxygen atom to form the C-terminus of the beta chain, while the remainder of the serine residue undergoes an oxidative deamination to produce ammonia and the pyruvoyl prosthetic group on the alpha chain. During this reaction, the Ser that is part of the protease active site of the proenzyme becomes the pyruvoyl prosthetic group, which constitutes an essential element of the active site of the mature decarboxylase.

It localises to the cell membrane. The enzyme catalyses a 1,2-diacyl-sn-glycero-3-phospho-L-serine + H(+) = a 1,2-diacyl-sn-glycero-3-phosphoethanolamine + CO2. Its pathway is phospholipid metabolism; phosphatidylethanolamine biosynthesis; phosphatidylethanolamine from CDP-diacylglycerol: step 2/2. Functionally, catalyzes the formation of phosphatidylethanolamine (PtdEtn) from phosphatidylserine (PtdSer). The protein is Phosphatidylserine decarboxylase proenzyme of Mannheimia succiniciproducens (strain KCTC 0769BP / MBEL55E).